The chain runs to 429 residues: Adenylosuccinate synthetase (429 aa).

Residues Gly12 to Lys18 and Gly40 to Thr42 contribute to the GTP site. The active-site Proton acceptor is the Asp13. Mg(2+) is bound by residues Asp13 and Gly40. IMP is bound by residues Asp13–Lys16, Asn38–His41, Thr128, Arg142, Gln223, Thr238, and Arg302. The active-site Proton donor is His41. Thr298 to Arg304 lines the substrate pocket. GTP contacts are provided by residues Arg304, Cys330–Asp332, and Ser412–Gly414.

Belongs to the adenylosuccinate synthetase family. As to quaternary structure, homodimer. Requires Mg(2+) as cofactor.

The protein resides in the cytoplasm. It catalyses the reaction IMP + L-aspartate + GTP = N(6)-(1,2-dicarboxyethyl)-AMP + GDP + phosphate + 2 H(+). Its pathway is purine metabolism; AMP biosynthesis via de novo pathway; AMP from IMP: step 1/2. Its function is as follows. Plays an important role in the de novo pathway of purine nucleotide biosynthesis. Catalyzes the first committed step in the biosynthesis of AMP from IMP. The polypeptide is Adenylosuccinate synthetase (Lactiplantibacillus plantarum (strain ATCC BAA-793 / NCIMB 8826 / WCFS1) (Lactobacillus plantarum)).